The sequence spans 339 residues: Senescence-specific cysteine protease SAG39 (339 aa).

Residues 1–23 form the signal peptide; that stretch reads MAMAKALLFAILGCLCLCSAVLA. Intrachain disulfides connect cysteine 144-cysteine 187, cysteine 178-cysteine 220, and cysteine 276-cysteine 328. Cysteine 147 is an active-site residue. Residues histidine 282 and asparagine 303 contribute to the active site.

This sequence belongs to the peptidase C1 family. Low expression in mature leaves.

The protein localises to the vacuole. Cysteine protease that may have a developmental senescence specific cell death function during apoptosis, heavy metal detoxification, and hypersensitive response. In Oryza sativa subsp. japonica (Rice), this protein is Senescence-specific cysteine protease SAG39.